The sequence spans 194 residues: Chitin synthase 2 (194 aa).

This sequence belongs to the chitin synthase family. Class III subfamily.

Its subcellular location is the cell membrane. It carries out the reaction [(1-&gt;4)-N-acetyl-beta-D-glucosaminyl](n) + UDP-N-acetyl-alpha-D-glucosamine = [(1-&gt;4)-N-acetyl-beta-D-glucosaminyl](n+1) + UDP + H(+). In terms of biological role, polymerizes chitin, a structural polymer of the cell wall and septum, by transferring the sugar moiety of UDP-GlcNAc to the non-reducing end of the growing chitin polymer. The sequence is that of Chitin synthase 2 (CHS2) from Ajellomyces capsulatus (Darling's disease fungus).